The chain runs to 642 residues: Fork head protein homolog 2 (642 aa).

The disordered stretch occupies residues 1 to 23; that stretch reads MTVRRLESKSEHISDDEERKEQL. Residues 96–160 enclose the FHA domain; that stretch reads IILGREPANP…NGIKVDGKLF (65 aa). The segment at residues 223–318 is a DNA-binding region (fork-head); it reads KPPYSYSVMI…AKTRKTPRKR (96 aa). The span at 310–319 shows a compositional bias: basic residues; it reads KTRKTPRKRS. Disordered stretches follow at residues 310 to 392, 519 to 574, and 586 to 642; these read KTRK…ETYK, VSDS…TEEN, and ATME…KSSA. Phosphoserine is present on residues Ser319, Ser321, Ser322, Ser334, and Ser336. Positions 348 to 362 are enriched in low complexity; it reads TSIPAAEPASSTTSA. Polar residues-rich tracts occupy residues 363-381, 519-552, and 599-642; these read RDQTPSTPKDVGSPSTAET, VSDSPTMNLANSNSKSSPVAVQRVSTLPQASANK, and TPTS…KSSA. Residues Ser375, Ser535, and Ser626 each carry the phosphoserine modification.

Phosphorylated. Occurs periodically during mitosis.

The protein localises to the nucleus. Required for promoter sequence element PCB-driven, M-phase-specific transcription. Acts as a transcriptional activator with a role in the regulation of mitosis. Binds, cooperatively with mcm1, the CLB cluster regulatory elements throughout the cell cycle. Regulates the periodic transcription of cdc15 and spo12. Required for the correct timing, positioning and contraction of the division septum. This Schizosaccharomyces pombe (strain 972 / ATCC 24843) (Fission yeast) protein is Fork head protein homolog 2 (fkh2).